The sequence spans 514 residues: 2,3-bisphosphoglycerate-independent phosphoglycerate mutase (514 aa).

D14 and S64 together coordinate Mn(2+). Catalysis depends on S64, which acts as the Phosphoserine intermediate. Substrate-binding positions include H125, 155 to 156, R187, R193, 263 to 266, and K337; these read RD and RADR. Mn(2+) is bound by residues D404, H408, D445, H446, and H463.

It belongs to the BPG-independent phosphoglycerate mutase family. In terms of assembly, monomer. Mn(2+) serves as cofactor.

The catalysed reaction is (2R)-2-phosphoglycerate = (2R)-3-phosphoglycerate. The protein operates within carbohydrate degradation; glycolysis; pyruvate from D-glyceraldehyde 3-phosphate: step 3/5. In terms of biological role, catalyzes the interconversion of 2-phosphoglycerate and 3-phosphoglycerate. The polypeptide is 2,3-bisphosphoglycerate-independent phosphoglycerate mutase (Hahella chejuensis (strain KCTC 2396)).